Reading from the N-terminus, the 150-residue chain is C-C motif chemokine 25 (150 aa).

Residues 1–23 (MNLWLLACLVAGFLGAWAPAVHT) form the signal peptide. Cystine bridges form between Cys-30-Cys-58 and Cys-31-Cys-75.

It belongs to the intercrine beta (chemokine CC) family. In terms of tissue distribution, specifically expressed by thymic dendritic cells. High levels in thymus and small intestine.

Its subcellular location is the secreted. In terms of biological role, potentially involved in T-cell development. Recombinant protein shows chemotactic activity on thymocytes, macrophages, THP-1 cells, and dendritics cells but is inactive on peripheral blood lymphocytes and neutrophils. Binds to CCR9. Isoform 2 is an antagonist of isoform 1. Binds to atypical chemokine receptor ACKR4 and mediates the recruitment of beta-arrestin (ARRB1/2) to ACKR4. The sequence is that of C-C motif chemokine 25 (CCL25) from Homo sapiens (Human).